A 138-amino-acid chain; its full sequence is Mini-ribonuclease 3 (138 aa).

Aspartate 33 is a catalytic residue.

It belongs to the MrnC RNase family. As to quaternary structure, homodimer. The cofactor is Mg(2+).

The protein localises to the cytoplasm. Its function is as follows. Involved in correct processing of both the 5' and 3' ends of 23S rRNA precursor. Processes 30S rRNA precursor transcript even in absence of ribonuclease 3 (Rnc); Rnc processes 30S rRNA into smaller rRNA precursors. This chain is Mini-ribonuclease 3, found in Synechococcus sp. (strain ATCC 27144 / PCC 6301 / SAUG 1402/1) (Anacystis nidulans).